Here is an 89-residue protein sequence, read N- to C-terminus: Small ribosomal subunit protein uS15 (89 aa).

This sequence belongs to the universal ribosomal protein uS15 family. As to quaternary structure, part of the 30S ribosomal subunit. Forms a bridge to the 50S subunit in the 70S ribosome, contacting the 23S rRNA.

In terms of biological role, one of the primary rRNA binding proteins, it binds directly to 16S rRNA where it helps nucleate assembly of the platform of the 30S subunit by binding and bridging several RNA helices of the 16S rRNA. Its function is as follows. Forms an intersubunit bridge (bridge B4) with the 23S rRNA of the 50S subunit in the ribosome. This is Small ribosomal subunit protein uS15 from Colwellia psychrerythraea (strain 34H / ATCC BAA-681) (Vibrio psychroerythus).